The sequence spans 1212 residues: Periplasmic/secreted acid trehalase ATH1 (1212 aa).

Residues 1–82 (MGFKDKILFW…STRVKIRRQN (82 aa)) are Cytoplasmic-facing. Residues 83–103 (ILNTTLILGMLIALVIWTAIL) form a helical membrane-spanning segment. At 104-1212 (STNSYFSSSL…ATIREIVLQE (1109 aa)) the chain is on the periplasmic side. Residues Asn-243, Asn-275, Asn-296, Asn-362, Asn-414, Asn-428, and Asn-521 are each glycosylated (N-linked (GlcNAc...) asparagine). 546–547 (WD) serves as a coordination point for substrate. Residues Asn-572, Asn-601, Asn-661, and Asn-671 are each glycosylated (N-linked (GlcNAc...) asparagine). Glu-677 serves as the catalytic Proton donor. N-linked (GlcNAc...) asparagine glycans are attached at residues Asn-729 and Asn-738. Residue 744–745 (KQ) coordinates substrate. N-linked (GlcNAc...) asparagine glycosylation is found at Asn-912, Asn-938, Asn-993, Asn-1011, Asn-1033, Asn-1052, Asn-1070, Asn-1097, and Asn-1165.

This sequence belongs to the glycosyl hydrolase 65 family. As to quaternary structure, homodimer.

It is found in the secreted. The protein localises to the periplasm. The protein resides in the membrane. It catalyses the reaction alpha,alpha-trehalose + H2O = alpha-D-glucose + beta-D-glucose. In terms of biological role, periplasmic/secreted acid trehalase that catalyzes hydrolysis of the disaccharide trehalose and required for growth on trehalose as carbon source. Growth on trehalose is not restricted to respiration. This is Periplasmic/secreted acid trehalase ATH1 from Candida glabrata (Yeast).